The chain runs to 87 residues: Putative regulatory protein BCG9842_B1272 (87 aa).

This sequence belongs to the RemA family.

This is Putative regulatory protein BCG9842_B1272 from Bacillus cereus (strain G9842).